We begin with the raw amino-acid sequence, 206 residues long: Small ribosomal subunit protein uS4 (206 aa).

The S4 RNA-binding domain occupies 96-156; sequence TRLDNVVYRM…EKSQKQARIK (61 aa).

It belongs to the universal ribosomal protein uS4 family. As to quaternary structure, part of the 30S ribosomal subunit. Contacts protein S5. The interaction surface between S4 and S5 is involved in control of translational fidelity.

Functionally, one of the primary rRNA binding proteins, it binds directly to 16S rRNA where it nucleates assembly of the body of the 30S subunit. Its function is as follows. With S5 and S12 plays an important role in translational accuracy. This Shewanella loihica (strain ATCC BAA-1088 / PV-4) protein is Small ribosomal subunit protein uS4.